The following is a 363-amino-acid chain: Ethanol acetyltransferase 1 (363 aa).

Residues 1-19 constitute a mitochondrion transit peptide; sequence MLLAYTVRPSNWSFTRRAY. The AB hydrolase-1 domain occupies 65-164; it reads PIIFYHGLLG…FSAACIIDNS (100 aa). Catalysis depends on charge relay system residues Ser138, Asp162, and His313.

Belongs to the AB hydrolase superfamily.

The protein resides in the mitochondrion. It carries out the reaction ethanol + acetyl-CoA = ethyl acetate + CoA. The catalysed reaction is acetyl-CoA + H2O = acetate + CoA + H(+). It catalyses the reaction ethyl acetate + H2O = ethanol + acetate + H(+). In terms of biological role, alcohol acetyltransferase that catalyzes the synthesis of ethyl acetate from ethanol and acetyl-CoA. Can also function as a thioesterase by hydrolyzing acetyl-CoA in the absence of ethanol, as well as esterase hydrolyzing ethyl acetate. The protein is Ethanol acetyltransferase 1 (EAT1) of Kluyveromyces marxianus (strain DMKU3-1042 / BCC 29191 / NBRC 104275) (Yeast).